Consider the following 129-residue polypeptide: N16.5 matrix protein (129 aa).

The first 23 residues, 1–23 (MTCTLRWTITALVLLGICHLARP), serve as a signal peptide directing secretion. 5 consecutive repeat copies span residues 91–92 (NG), 93–94 (NG), 95–96 (NG), 97–98 (NG), and 99–100 (NG). The 5 X 2 AA tandem repeats of N-G stretch occupies residues 91–100 (NGNGNGNGNG).

It belongs to the N16 matrix protein family. As to quaternary structure, heterooligomer; disulfide-linked. Pif97, Pif80, N16 and other proteins form a complex. Component of conchiolin, the organic matrix of nacre. Specifically expressed in mantle epithelium.

The protein resides in the secreted. It is found in the extracellular space. The protein localises to the extracellular matrix. Functionally, may be specifically involved in the formation of the nacreous layer. In Pinctada fucata (Akoya pearl oyster), this protein is N16.5 matrix protein.